We begin with the raw amino-acid sequence, 88 residues long: Small ribosomal subunit protein bS20 (88 aa).

It belongs to the bacterial ribosomal protein bS20 family.

Its function is as follows. Binds directly to 16S ribosomal RNA. This chain is Small ribosomal subunit protein bS20, found in Maricaulis maris (strain MCS10) (Caulobacter maris).